We begin with the raw amino-acid sequence, 381 residues long: Probable serine/threonine-protein kinase PBL21 (381 aa).

The S-palmitoyl cysteine moiety is linked to residue C3. Residues 78 to 354 (FREVNLLGEG…GDIVVALEYL (277 aa)) form the Protein kinase domain. ATP is bound by residues 84–92 (LGEGGFGRV) and K106. Residue D204 is the Proton acceptor of the active site. The tract at residues 362–381 (EARNVSSPSPEISRTPRRDL) is disordered.

It belongs to the protein kinase superfamily. Ser/Thr protein kinase family. Palmitoylation at Cys-3 and Cys-7 are required for plasma membrane location.

Its subcellular location is the cell membrane. The catalysed reaction is L-seryl-[protein] + ATP = O-phospho-L-seryl-[protein] + ADP + H(+). The enzyme catalyses L-threonyl-[protein] + ATP = O-phospho-L-threonyl-[protein] + ADP + H(+). Functionally, may be involved in plant defense signaling. This is Probable serine/threonine-protein kinase PBL21 from Arabidopsis thaliana (Mouse-ear cress).